The following is a 383-amino-acid chain: Lipid-A-disaccharide synthase (383 aa).

It belongs to the LpxB family.

It catalyses the reaction a lipid X + a UDP-2-N,3-O-bis[(3R)-3-hydroxyacyl]-alpha-D-glucosamine = a lipid A disaccharide + UDP + H(+). Its pathway is bacterial outer membrane biogenesis; LPS lipid A biosynthesis. Functionally, condensation of UDP-2,3-diacylglucosamine and 2,3-diacylglucosamine-1-phosphate to form lipid A disaccharide, a precursor of lipid A, a phosphorylated glycolipid that anchors the lipopolysaccharide to the outer membrane of the cell. This chain is Lipid-A-disaccharide synthase, found in Trichlorobacter lovleyi (strain ATCC BAA-1151 / DSM 17278 / SZ) (Geobacter lovleyi).